The chain runs to 174 residues: Ly6/PLAUR domain-containing protein 6 (174 aa).

An N-terminal signal peptide occupies residues 1-22 (MEPWPLMAWGLMLTAITGWIKA). In terms of domain architecture, UPAR/Ly6 spans 47–141 (FKCFTCEDAP…PRNETDAIFS (95 aa)). 6 disulfides stabilise this stretch: Cys-49/Cys-77, Cys-52/Cys-61, Cys-70/Cys-96, Cys-102/Cys-121, Cys-107/Cys-118, and Cys-122/Cys-127. 2 N-linked (GlcNAc...) asparagine glycosylation sites follow: Asn-134 and Asn-147. A lipid anchor (GPI-anchor amidated serine) is attached at Ser-149. A propeptide spans 150 to 174 (AQSTQTLPLLLLSVSITSLMLHSIN) (removed in mature form).

Interacts with fzd8 and lrp6.

It is found in the cell membrane. The protein localises to the membrane raft. Functionally, acts as an important regulator of embryogenesis through its enhancement of Wnt/beta-catenin signaling. Positively regulates Wnt/beta-catenin signaling by ensuring phosphorylation of lrp6 specifically in plasma membrane rafts and its subsequent internalization into signaling-competent vesicles. Essential for the wnt8-mediated patterning of the mesoderm and neuroectoderm during gastrulation. This is Ly6/PLAUR domain-containing protein 6 (lypd6) from Danio rerio (Zebrafish).